Consider the following 378-residue polypeptide: Queuine tRNA-ribosyltransferase (378 aa).

The active-site Proton acceptor is Asp-91. Substrate-binding positions include 91 to 95 (DSGGF), Asp-145, Gln-189, and Gly-216. Positions 247-253 (GVGKPED) are RNA binding. Asp-266 acts as the Nucleophile in catalysis. Residues 271–275 (TRNAR) form an RNA binding; important for wobble base 34 recognition region. Zn(2+)-binding residues include Cys-304, Cys-306, Cys-309, and His-335.

It belongs to the queuine tRNA-ribosyltransferase family. Homodimer. Within each dimer, one monomer is responsible for RNA recognition and catalysis, while the other monomer binds to the replacement base PreQ1. Zn(2+) serves as cofactor.

The enzyme catalyses 7-aminomethyl-7-carbaguanine + guanosine(34) in tRNA = 7-aminomethyl-7-carbaguanosine(34) in tRNA + guanine. The protein operates within tRNA modification; tRNA-queuosine biosynthesis. In terms of biological role, catalyzes the base-exchange of a guanine (G) residue with the queuine precursor 7-aminomethyl-7-deazaguanine (PreQ1) at position 34 (anticodon wobble position) in tRNAs with GU(N) anticodons (tRNA-Asp, -Asn, -His and -Tyr). Catalysis occurs through a double-displacement mechanism. The nucleophile active site attacks the C1' of nucleotide 34 to detach the guanine base from the RNA, forming a covalent enzyme-RNA intermediate. The proton acceptor active site deprotonates the incoming PreQ1, allowing a nucleophilic attack on the C1' of the ribose to form the product. After dissociation, two additional enzymatic reactions on the tRNA convert PreQ1 to queuine (Q), resulting in the hypermodified nucleoside queuosine (7-(((4,5-cis-dihydroxy-2-cyclopenten-1-yl)amino)methyl)-7-deazaguanosine). The chain is Queuine tRNA-ribosyltransferase from Vibrio campbellii (strain ATCC BAA-1116).